The sequence spans 678 residues: Geranylgeranyl transferase type-2 subunit alpha 1 (678 aa).

PFTA repeat units follow at residues 40–74, 86–120, 121–155, 156–190, and 201–235; these read YTNE…DRLA, ILDE…KGHS, SVGN…LTNR, SEQD…SLLA, and KIPE…QTLN. LRR repeat units follow at residues 510 to 532, 533 to 554, 555 to 578, 580 to 604, and 638 to 663; these read MNNL…VEKL, LFVQ…LEAM, QLLS…SLRH, KQLK…RYLC, and DLNL…VLQV.

Belongs to the protein prenyltransferase subunit alpha family. In terms of assembly, heterotrimer composed of the alpha subunit RGTA, the beta subunit RGTB and REP; within this trimer, RGTA and RGTB form the catalytic component, while REP mediates peptide substrate binding.

The enzyme catalyses geranylgeranyl diphosphate + L-cysteinyl-[protein] = S-geranylgeranyl-L-cysteinyl-[protein] + diphosphate. The enzymatic reaction requires the aid of the Rab escort protein REP. Functionally, catalyzes the transfer of a geranylgeranyl moiety from geranylgeranyl diphosphate to both cysteines of Rab proteins with the C-terminal sequence -CCXX, CXXX, -XCCX and -XCXC, such as RABA1A, RABA2A, RABF2A and RABG2. In vitro, can prenylate PGGTI targets with the C-terminal Cys-aliphatic-aliphatic-X (CaaX) with leucine in the terminal position. Substrates with the C-terminal sequence -CSIL such as ARAC11/ROP1 or GG2/AGG2 are prenylated independently of REP and when the alpha subunit is associated with a beta subunit (RGTB1 or RGTB2). This Arabidopsis thaliana (Mouse-ear cress) protein is Geranylgeranyl transferase type-2 subunit alpha 1.